Consider the following 1027-residue polypeptide: Kinesin heavy chain isoform 5A (1027 aa).

A2 is modified (N-acetylalanine). Residues 9-327 form the Kinesin motor domain; sequence SIKVLCRFRP…LMFGQRAKTI (319 aa). 86–93 serves as a coordination point for ATP; that stretch reads GQTSSGKT. The segment at 174–315 is microtubule-binding; the sequence is VSSPEEILDV…PSSYNDAETK (142 aa). Residues 271 to 361 are necessary for interaction with ZFYVE27; sequence EGTKSYVPYR…KTKAQKETIA (91 aa). Residues 331-906 adopt a coiled-coil conformation; the sequence is ASVNLELTAE…VDRIKEAVRY (576 aa). The tract at residues 353–1027 is interaction with BICD2; it reads TKAQKETIAK…FPLHQETAAS (675 aa). T397 bears the Phosphothreonine mark. The tract at residues 906–937 is disordered; sequence YKSSGKRGHSAQIAKPVRPGHYPASSPTNPYG. Positions 907-1027 are globular; the sequence is KSSGKRGHSA…FPLHQETAAS (121 aa).

It belongs to the TRAFAC class myosin-kinesin ATPase superfamily. Kinesin family. Kinesin subfamily. As to quaternary structure, oligomer composed of two heavy chains and two light chains. Interacts with GRIP1. Interacts with FMR1 (via C-terminus); this interaction is increased in a mGluR-dependent manner. Interacts with BORCS5. Interacts with ZFYVE27. Interacts with VAPA, VAPB, SURF4, RAB11A (GDP-bound form), RAB11B (GDP-bound form) and RTN3 in a ZFYVE27-dependent manner. Interacts with BICD2. Interacts with DTNB.

The protein localises to the cytoplasm. The protein resides in the perinuclear region. It localises to the cytoskeleton. It is found in the perikaryon. The catalysed reaction is ATP + H2O + a kinesin associated with a microtubule at position (n) = ADP + phosphate a kinesin associated with a microtubule at position (n+1, toward the plus end).. Functionally, microtubule-dependent motor required for slow axonal transport of neurofilament proteins (NFH, NFM and NFL). Can induce formation of neurite-like membrane protrusions in non-neuronal cells in a ZFYVE27-dependent manner. The ZFYVE27-KIF5A complex contributes to the vesicular transport of VAPA, VAPB, SURF4, RAB11A, RAB11B and RTN3 proteins in neurons. Required for anterograde axonal transportation of MAPK8IP3/JIP3 which is essential for MAPK8IP3/JIP3 function in axon elongation. The sequence is that of Kinesin heavy chain isoform 5A (Kif5a) from Mus musculus (Mouse).